Reading from the N-terminus, the 375-residue chain is Growth/differentiation factor 8 (375 aa).

The first 18 residues, 1–18 (MQKLQISVYIYLFMLIVA), serve as a signal peptide directing secretion. A propeptide spanning residues 19–266 (GPVDLNENSE…VTDTPKRSRR (248 aa)) is cleaved from the precursor. N-linked (GlcNAc...) asparagine glycans are attached at residues asparagine 47 and asparagine 71. Cystine bridges form between cysteine 272–cysteine 282, cysteine 281–cysteine 340, cysteine 309–cysteine 372, and cysteine 313–cysteine 374.

The protein belongs to the TGF-beta family. Homodimer; disulfide-linked. Interacts with WFIKKN2, leading to inhibit its activity. Interacts with FSTL3. Post-translationally, synthesized as large precursor molecule that undergoes proteolytic cleavage to generate an N-terminal propeptide and a disulfide linked C-terminal dimer, which is the biologically active molecule. The circulating form consists of a latent complex of the C-terminal dimer and other proteins, including its propeptide, which maintain the C-terminal dimer in a latent, inactive state. Ligand activation requires additional cleavage of the prodomain by a tolloid-like metalloproteinase.

The protein resides in the secreted. Functionally, acts specifically as a negative regulator of skeletal muscle growth. In Bubalus bubalis (Domestic water buffalo), this protein is Growth/differentiation factor 8 (MSTN).